The following is a 546-amino-acid chain: CTP synthase (546 aa).

Positions 1 to 269 (MNSNTKIIFV…DAKLVELLNL (269 aa)) are amidoligase domain. S16 lines the CTP pocket. Residue S16 participates in UTP binding. Residues 17 to 22 (SLGKGV) and D74 each bind ATP. Residues D74 and E143 each coordinate Mg(2+). Residues 150 to 152 (DIE), 190 to 195 (KTKPTQ), and K226 contribute to the CTP site. UTP contacts are provided by residues 190–195 (KTKPTQ) and K226. Residues 294 to 546 (IIAMVGKYVS…IQAAIENSNN (253 aa)) form the Glutamine amidotransferase type-1 domain. G356 serves as a coordination point for L-glutamine. The active-site Nucleophile; for glutamine hydrolysis is the C383. Residues 384 to 387 (LGMQ), E407, and R474 each bind L-glutamine. Residues H519 and E521 contribute to the active site.

This sequence belongs to the CTP synthase family. As to quaternary structure, homotetramer.

The enzyme catalyses UTP + L-glutamine + ATP + H2O = CTP + L-glutamate + ADP + phosphate + 2 H(+). The catalysed reaction is L-glutamine + H2O = L-glutamate + NH4(+). It carries out the reaction UTP + NH4(+) + ATP = CTP + ADP + phosphate + 2 H(+). Its pathway is pyrimidine metabolism; CTP biosynthesis via de novo pathway; CTP from UDP: step 2/2. Its activity is regulated as follows. Allosterically activated by GTP, when glutamine is the substrate; GTP has no effect on the reaction when ammonia is the substrate. The allosteric effector GTP functions by stabilizing the protein conformation that binds the tetrahedral intermediate(s) formed during glutamine hydrolysis. Inhibited by the product CTP, via allosteric rather than competitive inhibition. Functionally, catalyzes the ATP-dependent amination of UTP to CTP with either L-glutamine or ammonia as the source of nitrogen. Regulates intracellular CTP levels through interactions with the four ribonucleotide triphosphates. This Francisella tularensis subsp. holarctica (strain FTNF002-00 / FTA) protein is CTP synthase.